The sequence spans 1888 residues: Tensin-1 (1888 aa).

The span at 21–31 shows a compositional bias: pro residues; it reads PQPPGTPPGPA. Residues 21-45 form a disordered region; that stretch reads PQPPGTPPGPARPERCEPGGAAPDP. The segment at 61-108 adopts a Phorbol-ester/DAG-type zinc-finger fold; it reads THHFKVKAFKKVKPCGICRQAITREGCVCKVCSFSCHRKCQAKVAAPC. The interval 132–174 is disordered; it reads GEGDCRVGSSPKNLEEGGSMRVSPSIQPQPQSQPTSLSRNTSV. Positions 154–167 are enriched in low complexity; that stretch reads SPSIQPQPQSQPTS. The region spanning 175-347 is the Phosphatase tensin-type domain; sequence SRAMEDSCEL…HYFSGLLSGS (173 aa). One can recognise a C2 tensin-type domain in the interval 352–478; that stretch reads NKPLFLHHVI…GKVEFVFSYG (127 aa). A phosphoserine mark is found at Ser-509 and Ser-535. A Phosphotyrosine modification is found at Tyr-537. 3 disordered regions span residues 543-608, 696-722, and 789-854; these read KDSL…PQEK, VTNT…YSTE, and RSQS…SAET. Ser-549 is subject to Phosphoserine. Residues 571–584 show a composition bias toward polar residues; the sequence is LSVSSDSGNSTAST. At Ser-604 the chain carries Phosphoserine. Position 792 is a phosphoserine (Ser-792). The segment covering 835–852 has biased composition (polar residues); the sequence is RSPLQSLARSKPSPQLSA. Ser-867 is subject to Phosphoserine. 2 disordered regions span residues 893 to 1077 and 1109 to 1555; these read PLHK…RSPV and EEME…AGSL. The segment covering 905 to 922 has biased composition (low complexity); that stretch reads PGASPLSSQPLLGSSRQS. 3 positions are modified to phosphoserine: Ser-930, Ser-935, and Ser-952. Polar residues predominate over residues 962–986; that stretch reads GSNQSFHPKSPASSTFLPSPHSSAG. A Phosphothreonine modification is found at Thr-1015. The residue at position 1054 (Ser-1054) is a Phosphoserine. Over residues 1057 to 1069 the composition is skewed to polar residues; sequence QYENQSPEATSPR. Phosphotyrosine is present on Tyr-1058. Ser-1062, Ser-1118, and Ser-1122 each carry phosphoserine. Residues 1169 to 1179 show a composition bias toward basic and acidic residues; sequence EVTKPPEEPRS. Low complexity predominate over residues 1227–1239; it reads SPSPLSTSSPILS. The span at 1240-1257 shows a compositional bias: polar residues; it reads ADSTSVGSFPSVVSSDQG. A Phosphoserine modification is found at Ser-1279. The segment covering 1284–1300 has biased composition (low complexity); it reads SYQSSSPVPVGGSSYNS. Residues 1301 to 1322 are compositionally biased toward polar residues; it reads PDYSLQPFSSSPESQGQPQYSA. The O-linked (GalNAc...) serine glycan is linked to Ser-1321. Residue Ser-1331 is modified to Phosphoserine. A Phosphothreonine modification is found at Thr-1343. The residue at position 1346 (Ser-1346) is a Phosphoserine. Thr-1420 carries the phosphothreonine modification. Ser-1423 is subject to Phosphoserine. The segment covering 1436 to 1446 has biased composition (polar residues); sequence NLASSLHSNAV. Residues Ser-1448, Ser-1463, and Ser-1468 each carry the phosphoserine modification. Residues 1490–1507 are compositionally biased toward polar residues; the sequence is LSRQSSASGYQAPSTPSF. The segment covering 1518–1530 has biased composition (low complexity); that stretch reads SSPATSPSPDSAA. A phosphoserine mark is found at Ser-1535, Ser-1547, Ser-1554, and Ser-1599. The SH2 domain maps to 1616 to 1725; the sequence is WYKPEISREQ…ALPCKLVIPS (110 aa). Ser-1741 is modified (phosphoserine). Residues 1751 to 1885 enclose the PTB domain; it reads ACNVLFVNSV…FVSKVMLSAG (135 aa).

The protein belongs to the PTEN phosphatase protein family. As to quaternary structure, binds to actin filaments and interacts with phosphotyrosine-containing proteins. Interacts with STARD8. Interacts with protein phosphatase PPP1CA. Interacts (via N-terminus) with Rho GTPase-activating protein DLC1; the interaction is decreased by phosphorylation of TNS1. Interacts with tyrosine-phosphorylated proteins BCAR1/p130Cas and PTK2/FAK; the interactions are increased by phosphorylation of TNS1. In terms of processing, extensively phosphorylated on serine and threonine residues in a p38 MAPK-dependent manner which reduces interaction with DLC1 and increases interaction with tyrosine-phosphorylated proteins including BCAR1/p130cas and PTK2/FAK. The majority of the phosphorylated Ser/Thr residues are immediately adjacent to a proline residue. Also phosphorylated on tyrosine residues. Post-translationally, rapidly cleaved by calpain II.

The protein localises to the cell surface. It localises to the cell junction. The protein resides in the focal adhesion. Its subcellular location is the cytoplasm. It is found in the cytoskeleton. In terms of biological role, may act as a protein phosphatase and/or a lipid phosphatase. Involved in fibrillar adhesion formation. Essential for myofibroblast differentiation and myofibroblast-mediated extracellular matrix deposition. Enhances RHOA activation in the presence of DLC1. Plays a role in cell polarization and migration. May be involved in cartilage development and in linking signal transduction pathways to the cytoskeleton. The polypeptide is Tensin-1 (Mus musculus (Mouse)).